The sequence spans 234 residues: Small ribosomal subunit protein uS3 (234 aa).

The region spanning 39–107 (IRKFLKKELY…EVSINIKEVK (69 aa)) is the KH type-2 domain.

This sequence belongs to the universal ribosomal protein uS3 family. As to quaternary structure, part of the 30S ribosomal subunit. Forms a tight complex with proteins S10 and S14.

Binds the lower part of the 30S subunit head. Binds mRNA in the 70S ribosome, positioning it for translation. The chain is Small ribosomal subunit protein uS3 from Helicobacter pylori (strain G27).